The primary structure comprises 1519 residues: DNA (cytosine-5)-methyltransferase 4 (1519 aa).

Residues 1–24 (MEMETKAGKQKKRSVDSDDDVSKE) show a composition bias toward basic and acidic residues. The segment at 1 to 31 (MEMETKAGKQKKRSVDSDDDVSKERRPKRAA) is disordered. Residue Lys-583 forms a Glycyl lysine isopeptide (Lys-Gly) (interchain with G-Cter in ubiquitin) linkage. Positions 641–668 (ENVEEEELEEVEEEDENEEDDPEENELE) are disordered. Over residues 642 to 668 (NVEEEELEEVEEEDENEEDDPEENELE) the composition is skewed to acidic residues. BAH domains follow at residues 715–849 (DVVV…FSLP) and 916–1033 (TTLK…KQFP). The SAM-dependent MTase C5-type domain maps to 1078 to 1512 (LATLDIFAGC…RKLKEALYLK (435 aa)). Cys-1183 is an active-site residue.

Belongs to the class I-like SAM-binding methyltransferase superfamily. C5-methyltransferase family. Expressed at low levels in vegetative and floral organs.

The protein resides in the nucleus. It carries out the reaction a 2'-deoxycytidine in DNA + S-adenosyl-L-methionine = a 5-methyl-2'-deoxycytidine in DNA + S-adenosyl-L-homocysteine + H(+). In terms of biological role, maintains chromatin CpG methylation that plays a role in genomic imprinting, regulation of embryogenesis and seed viability. Required for proper patterns of CG DNA methylation in dividing cells. This is DNA (cytosine-5)-methyltransferase 4 (MET4) from Arabidopsis thaliana (Mouse-ear cress).